Reading from the N-terminus, the 191-residue chain is Adenylate kinase (191 aa).

12 to 17 (GSGKTT) is an ATP binding site. An NMP region spans residues 34–63 (STGDLLRAESAKKTERGLLIEKFTSQGELV). AMP contacts are provided by residues Thr35, Arg40, 61–63 (ELV), 88–91 (GYPR), and Gln95. Residues 130–136 (GRSRGAD) are LID. Arg131 lines the ATP pocket. Residues Arg133 and Arg145 each contribute to the AMP site. Arg173 provides a ligand contact to ATP.

Belongs to the adenylate kinase family. In terms of assembly, monomer.

Its subcellular location is the cytoplasm. The catalysed reaction is AMP + ATP = 2 ADP. The protein operates within purine metabolism; AMP biosynthesis via salvage pathway; AMP from ADP: step 1/1. Catalyzes the reversible transfer of the terminal phosphate group between ATP and AMP. Plays an important role in cellular energy homeostasis and in adenine nucleotide metabolism. The chain is Adenylate kinase from Helicobacter pylori (strain ATCC 700392 / 26695) (Campylobacter pylori).